Reading from the N-terminus, the 438-residue chain is V-type ATP synthase beta chain (438 aa).

Belongs to the ATPase alpha/beta chains family.

Functionally, produces ATP from ADP in the presence of a proton gradient across the membrane. The V-type beta chain is a regulatory subunit. In Protochlamydia amoebophila (strain UWE25), this protein is V-type ATP synthase beta chain.